The following is a 293-amino-acid chain: MQKVTFPNKILPYFLLAPQIVLTVVFFFWPASQAIYQSFMREDAFGLKSTFVELANFTAVLSDPNYLHSVQVTVVFNVLTALLAMGVALLLATAADRVIRGQTFYRTLLIWPYAVAPAVAGMLWLFMFNPAMGTFAYLLRRNGIAWDPLLDGNQAMGLVVVAAAWKQISYNFLFFVAGLQAIPKSLIEAAAIDGARGARRFWTIVFPLLAPTSFFLLVVNTVYAFFDTFGIIHAVTGGGPAKATETLVYKVYNDGFVNLNLGSSSAQSVILMAIVIALTAFQFRFVEKRVHYS.

Helical transmembrane passes span 10–30 (ILPY…FFWP), 72–92 (VTVV…LLLA), 108–128 (LLIW…LFMF), 155–177 (AMGL…FFVA), 204–224 (IVFP…TVYA), and 261–281 (LGSS…LTAF). Residues 66–282 (YLHSVQVTVV…AIVIALTAFQ (217 aa)) enclose the ABC transmembrane type-1 domain.

The protein belongs to the binding-protein-dependent transport system permease family. As to quaternary structure, the complex is composed of two ATP-binding proteins (UgpC), two transmembrane proteins (UgpA and UgpE) and a solute-binding protein (UgpB).

The protein resides in the cell inner membrane. Its function is as follows. Part of the ABC transporter complex UgpBAEC involved in sn-glycerol-3-phosphate (G3P) import. Probably responsible for the translocation of the substrate across the membrane. The protein is sn-glycerol-3-phosphate transport system permease protein UgpA (ugpA) of Brucella suis biovar 1 (strain 1330).